The primary structure comprises 196 residues: Imidazoleglycerol-phosphate dehydratase (196 aa).

Belongs to the imidazoleglycerol-phosphate dehydratase family.

The protein localises to the cytoplasm. It catalyses the reaction D-erythro-1-(imidazol-4-yl)glycerol 3-phosphate = 3-(imidazol-4-yl)-2-oxopropyl phosphate + H2O. It participates in amino-acid biosynthesis; L-histidine biosynthesis; L-histidine from 5-phospho-alpha-D-ribose 1-diphosphate: step 6/9. The chain is Imidazoleglycerol-phosphate dehydratase from Granulibacter bethesdensis (strain ATCC BAA-1260 / CGDNIH1).